A 295-amino-acid chain; its full sequence is Protoheme IX farnesyltransferase (295 aa).

9 helical membrane passes run 8–28 (VTKPGIIFGNLISVIGGFLLA), 35–55 (YPLFLFTLVGVSLVVASGCVF), 74–94 (VLVKGLISPKMSLVYATLLGI), 106–125 (PLAMWLAVMGFVVYVGVYSL), 132–152 (VYGTLIGSLSGAAPPVIGYCA), 162–182 (LILLAIFSLWQMPHSYAIAIF), 208–228 (ITLYIIAFAVATLMLSLGGYA), 233–253 (LVVAAAVSVWWLGMALRGYKA), and 264–284 (FVFSIVAITSLSVMMSVDFMV).

This sequence belongs to the UbiA prenyltransferase family. Protoheme IX farnesyltransferase subfamily.

It localises to the cell inner membrane. The enzyme catalyses heme b + (2E,6E)-farnesyl diphosphate + H2O = Fe(II)-heme o + diphosphate. It participates in porphyrin-containing compound metabolism; heme O biosynthesis; heme O from protoheme: step 1/1. In terms of biological role, converts heme B (protoheme IX) to heme O by substitution of the vinyl group on carbon 2 of heme B porphyrin ring with a hydroxyethyl farnesyl side group. This chain is Protoheme IX farnesyltransferase, found in Cronobacter sakazakii (strain ATCC BAA-894) (Enterobacter sakazakii).